The chain runs to 506 residues: Tyrosine-protein kinase isoform SRK4 (506 aa).

2 stretches are compositionally biased toward polar residues: residues 1–10 (MGSCCSSQDG) and 18–31 (AGSTVDSHELSQSV). The tract at residues 1–53 (MGSCCSSQDGDGNGKATAGSTVDSHELSQSVKGKIKQPEPKPKPPPQVPPAQD) is disordered. An SH3 domain is found at 54–116 (VKYPIYVGKY…PSNYVAEYKS (63 aa)). The SH2 domain occupies 122-214 (WFFGQVKRVD…GLCVNLKGPC (93 aa)). Positions 240–493 (IKLLRGLGAG…TLSWQLEEFF (254 aa)) constitute a Protein kinase domain. ATP is bound by residues 246–254 (LGAGQFGEV) and Lys268. Residue Asp359 is the Proton acceptor of the active site.

This sequence belongs to the protein kinase superfamily. Tyr protein kinase family.

The protein localises to the cytoplasm. The enzyme catalyses L-tyrosyl-[protein] + ATP = O-phospho-L-tyrosyl-[protein] + ADP + H(+). This Spongilla lacustris (Freshwater sponge) protein is Tyrosine-protein kinase isoform SRK4 (SRK1).